Here is a 269-residue protein sequence, read N- to C-terminus: Putative pyruvate, phosphate dikinase regulatory protein (269 aa).

147–154 (GLSRTSKT) provides a ligand contact to ADP.

It belongs to the pyruvate, phosphate/water dikinase regulatory protein family. PDRP subfamily.

The catalysed reaction is N(tele)-phospho-L-histidyl/L-threonyl-[pyruvate, phosphate dikinase] + ADP = N(tele)-phospho-L-histidyl/O-phospho-L-threonyl-[pyruvate, phosphate dikinase] + AMP + H(+). It catalyses the reaction N(tele)-phospho-L-histidyl/O-phospho-L-threonyl-[pyruvate, phosphate dikinase] + phosphate + H(+) = N(tele)-phospho-L-histidyl/L-threonyl-[pyruvate, phosphate dikinase] + diphosphate. In terms of biological role, bifunctional serine/threonine kinase and phosphorylase involved in the regulation of the pyruvate, phosphate dikinase (PPDK) by catalyzing its phosphorylation/dephosphorylation. The sequence is that of Putative pyruvate, phosphate dikinase regulatory protein from Clostridium botulinum (strain ATCC 19397 / Type A).